Reading from the N-terminus, the 133-residue chain is Small ribosomal subunit protein bS16 (133 aa).

Residues 83-101 (KRDARSNPKKAEPGKKAQE) show a composition bias toward basic and acidic residues. Residues 83-102 (KRDARSNPKKAEPGKKAQER) are disordered.

Belongs to the bacterial ribosomal protein bS16 family.

The sequence is that of Small ribosomal subunit protein bS16 from Mesorhizobium japonicum (strain LMG 29417 / CECT 9101 / MAFF 303099) (Mesorhizobium loti (strain MAFF 303099)).